Reading from the N-terminus, the 123-residue chain is Venom peptide MmKTx1 (123 aa).

A signal peptide spans 1–21 (MSIKISAIALFMLSFTVFVNG).

Belongs to the scorpion La1-like peptide family. Post-translationally, contains 4 disulfide bonds. As to expression, expressed by the venom gland.

It localises to the secreted. This Olivierus martensii (Manchurian scorpion) protein is Venom peptide MmKTx1.